A 152-amino-acid chain; its full sequence is Eukaryotic translation initiation factor 2 subunit 3 (152 aa).

Residue alanine 1 is modified to N-acetylalanine. Residue 51-54 participates in GTP binding; that stretch reads NKID.

The protein belongs to the TRAFAC class translation factor GTPase superfamily. Classic translation factor GTPase family. EIF2G subfamily. As to quaternary structure, eukaryotic translation initiation factor 2 eIF2 is a heterotrimeric complex composed of an alpha (EIF2S1), a beta (EIF2S2) and a gamma (EIF2S3) chain. eIF2 is member of the 43S pre-initiation complex (43S PIC). Interacts (via C-terminus) with CDC123; the interaction is direct.

It is found in the cytoplasm. The protein localises to the cytosol. Functionally, member of the eIF2 complex that functions in the early steps of protein synthesis by forming a ternary complex with GTP and initiator tRNA. This complex binds to a 40S ribosomal subunit, followed by mRNA binding to form the 43S pre-initiation complex (43S PIC). Junction of the 60S ribosomal subunit to form the 80S initiation complex is preceded by hydrolysis of the GTP bound to eIF2 and release of an eIF2-GDP binary complex. In order for eIF2 to recycle and catalyze another round of initiation, the GDP bound to eIF2 must exchange with GTP by way of a reaction catalyzed by eIF-2B. The chain is Eukaryotic translation initiation factor 2 subunit 3 (EIF2S3) from Oryctolagus cuniculus (Rabbit).